Consider the following 309-residue polypeptide: Heme-dependent oxidative N-demethylase beta subunit (309 aa).

Positions 2–103 constitute an FAD-binding FR-type domain; it reads STLLDVRVAA…SPPANLFPLH (102 aa). A 2Fe-2S ferredoxin-type domain is found at 226–309; that stretch reads FRVELARSGQ…GCGSPILLDL (84 aa). 4 residues coordinate [2Fe-2S] cluster: C260, C265, C268, and C296.

Belongs to the PDR/VanB family. As to quaternary structure, the heme-dependent oxidative N-demethylase (HODM) is a heterotetramer composed of a catalytic alpha subunit, a FMN/2Fe-2S-dependent oxidoreductase beta subunit, a gamma subunit with putative aminotransferase activity, and a delta subunit of unknown function. The cofactor is [2Fe-2S] cluster. It depends on FMN as a cofactor.

In terms of biological role, component of the heme-dependent oxidative N-demethylase (HODM) enzyme, that catalyzes the NADPH-dependent oxidation of dimethylamine (DMA) to methylamine (MA) and formaldehyde. Functions in bacterial methylated amine catabolism, linking alkylamine oxidation to the tetrahydrofolate C1 pool. The beta subunit of HODM binds FMN and a 2Fe-2S cluster, and likely reduces the ferric heme iron of the alpha subunit to ferrous using NADPH. The chain is Heme-dependent oxidative N-demethylase beta subunit from Ectopseudomonas mendocina (strain ymp) (Pseudomonas mendocina).